A 321-amino-acid polypeptide reads, in one-letter code: D-alanine--D-alanine ligase (321 aa).

The ATP-grasp domain maps to 121–315; the sequence is RSWFLTNNIN…FTNLIEEIIK (195 aa). 147 to 199 provides a ligand contact to ATP; sequence PVKRPYVIKPLTQGSSIGVEVIFEEDDFNFADYNFPYGYQVIIEQYIKGRELQ. Residues Glu-268, Glu-282, and Asn-284 each coordinate Mg(2+).

Belongs to the D-alanine--D-alanine ligase family. Mg(2+) is required as a cofactor. It depends on Mn(2+) as a cofactor.

Its subcellular location is the cytoplasm. It carries out the reaction 2 D-alanine + ATP = D-alanyl-D-alanine + ADP + phosphate + H(+). The protein operates within cell wall biogenesis; peptidoglycan biosynthesis. Cell wall formation. The protein is D-alanine--D-alanine ligase of Rickettsia felis (strain ATCC VR-1525 / URRWXCal2) (Rickettsia azadi).